We begin with the raw amino-acid sequence, 527 residues long: N-acetylglutamate synthase, mitochondrial (527 aa).

A mitochondrion-targeting transit peptide spans methionine 1–alanine 39. Residues serine 28–glutamate 65 are disordered. The tract at residues alanine 40–leucine 83 is may stabilize the oligomeric structure. An amino-acid kinase domain (AAK) region spans residues alanine 40–proline 361. Residues aspartate 360–cysteine 511 enclose the N-acetyltransferase domain. Substrate is bound by residues lysine 386, lysine 429, and arginine 459 to asparagine 464.

Belongs to the acetyltransferase family. In terms of assembly, homodimer. Homotetramer.

The protein localises to the mitochondrion matrix. The catalysed reaction is L-glutamate + acetyl-CoA = N-acetyl-L-glutamate + CoA + H(+). With respect to regulation, inhibited by L-arginine. Its function is as follows. Plays a role in the regulation of ureagenesis by producing the essential cofactor N-acetylglutamate (NAG), thus modulating carbamoylphosphate synthase I (cps1) activity. The protein is N-acetylglutamate synthase, mitochondrial of Danio rerio (Zebrafish).